A 3312-amino-acid polypeptide reads, in one-letter code: Cadherin EGF LAG seven-pass G-type receptor 3 (3312 aa).

Residues 1–32 (MMARRPPWRGLGGRSTPILLLLLLSLFPLSQE) form the signal peptide. Residues 33–2540 (ELGGGGHQGW…RLEGDLELLA (2508 aa)) are Extracellular-facing. 3 disordered regions span residues 90–112 (GRRQ…LGIE), 143–199 (GRTG…RKRV), and 212–306 (GSKG…EARK). Low complexity predominate over residues 159-173 (SSGVPGSGNSSPLPS). A compositionally biased stretch (pro residues) spans 290–299 (RPGPRPPGLP). 9 consecutive Cadherin domains span residues 326–433 (PQYN…SPVF), 434–545 (EQAQ…APQF), 546–651 (SEKR…IPIF), 652–756 (VSTP…RPEF), 757–858 (TMKE…RPVF), 859–961 (QSAH…APQF), 962–1067 (VASH…APVF), 1068–1169 (PAEE…SPVL), and 1170–1265 (NNFQ…RVVI). A glycan (N-linked (GlcNAc...) asparagine) is linked at N632. An N-linked (GlcNAc...) asparagine glycan is attached at N847. N-linked (GlcNAc...) asparagine glycans are attached at residues N1182, N1222, N1317, and N1327. An EGF-like 1; calcium-binding domain is found at 1375-1433 (DDNVCLREPCENYMKCVSVLRFDSSAPFLASASTLFRPIQPIAGLRCRCPPGFTGDFCE). Intrachain disulfides connect C1379/C1390, C1384/C1421, C1423/C1432, C1439/C1450, C1444/C1459, C1461/C1470, C1479/C1490, C1484/C1500, and C1502/C1513. One can recognise an EGF-like 2; calcium-binding domain in the interval 1435 to 1471 (ELDLCYSNPCRNGGACARREGGYTCVCRPRFTGEDCE). One can recognise an EGF-like 3; calcium-binding domain in the interval 1475 to 1514 (EAGRCVPGVCRNGGTCTDAPNGGFRCQCPAGGAFEGPRCE). The 205-residue stretch at 1515-1719 (VAARSFPPSS…VANNGTMAGC (205 aa)) folds into the Laminin G-like 1 domain. Residues N1649 and N1713 are each glycosylated (N-linked (GlcNAc...) asparagine). 4 disulfides stabilise this stretch: C1693–C1719, C1726–C1737, C1731–C1746, and C1748–C1757. The region spanning 1722-1758 (KLHFCDSGPCKNSGFCSERWGSFSCDCPVGFGGKDCQ) is the EGF-like 4; calcium-binding domain. The Laminin G-like 2 domain maps to 1764–1944 (PHHFRGNGTL…SHRVNAEPGC (181 aa)). An N-linked (GlcNAc...) asparagine glycan is attached at N1770. 9 disulfide bridges follow: C1915/C1944, C1950/C1961, C1955/C1970, C1972/C1981, C1985/C1996, C1990/C2008, C2010/C2019, C2027/C2040, and C2042/C2052. The EGF-like 5; calcium-binding domain maps to 1946 to 1982 (VTNACASGPCPPHADCRDLWQTFSCTCQPGYYGPGCV). D1963 is modified ((3R)-3-hydroxyaspartate). Residues 1983 to 2020 (DACLLNPCQNQGSCRHLPGAPHGYTCDCVGGYFGHHCE) enclose the EGF-like 6; calcium-binding domain. The EGF-like 7; calcium-binding domain occupies 2021 to 2053 (HRMDQQCPRGWWGSPTCGPCNCDVHKGFDPNCN). Residue N2053 is glycosylated (N-linked (GlcNAc...) asparagine). The EGF-like 8; calcium-binding domain maps to 2055–2090 (TNGQCHCKEFHYRPRGSDSCLPCDCYPVGSTSRSCA). Cystine bridges form between C2059/C2074, C2061/C2077, C2079/C2089, C2098/C2107, and C2110/C2122. The Laminin EGF-like domain maps to 2077 to 2124 (CDCYPVGSTSRSCAPHSGQCPCRPGALGRQCNSCDSPFAEVTASGCRV). Phosphotyrosine is present on Y2126. N-linked (GlcNAc...) asparagine glycans are attached at residues N2177, N2196, N2386, N2474, and N2506. The disordered stretch occupies residues 2361–2399 (THVLLPSQSPRPSPSEVLPTSSSIENSTTSSVVPPPAPP). Positions 2368 to 2530 (QSPRPSPSEV…GVLMDASPRE (163 aa)) constitute a GAIN-B domain. Residues 2380–2391 (TSSSIENSTTSS) are compositionally biased toward low complexity. Intrachain disulfides connect C2480/C2512 and C2500/C2514. The GPS stretch occupies residues 2480 to 2530 (CVQWDPPGLAEQHGVWTARDCELVHRNGSHARCRCSRTGTFGVLMDASPRE). Residues 2541-2561 (VFTHVVVAVSVAALVLTAAIL) form a helical membrane-spanning segment. Residues 2562–2572 (LSLRSLKSNVR) are Cytoplasmic-facing. A helical membrane pass occupies residues 2573–2593 (GIHANVAAALGVAELLFLLGI). Residues 2594–2601 (HRTHNQLV) lie on the Extracellular side of the membrane. The chain crosses the membrane as a helical span at residues 2602–2622 (CTAVAILLHYFFLSTFAWLFV). At 2623–2643 (QGLHLYRMQVEPRNVDRGAMR) the chain is on the cytoplasmic side. Residues 2644–2664 (FYHALGWGVPAVLLGLAVGLD) traverse the membrane as a helical segment. Residues 2665-2681 (PEGYGNPDFCWISVHEP) lie on the Extracellular side of the membrane. The helical transmembrane segment at 2682–2702 (LIWSFAGPVVLVIVMNGTMFL) threads the bilayer. Over 2703 to 2725 (LAARTSCSTGQREAKKTSALTLR) the chain is Cytoplasmic. Residues 2726-2746 (SSFLLLLLVSASWLFGLLAVN) form a helical membrane-spanning segment. Topologically, residues 2747 to 2753 (HSILAFH) are extracellular. Residues 2754 to 2774 (YLHAGLCGLQGLAVLLLFCVL) traverse the membrane as a helical segment. The Cytoplasmic portion of the chain corresponds to 2775–3312 (NADARAAWMP…SEVPRSEGHS (538 aa)). Disordered stretches follow at residues 2888–2927 (AGAD…QRPL) and 2978–3006 (TSKD…AQRQ). Over residues 2890 to 2900 (ADSDSDSDLSL) the composition is skewed to acidic residues. Position 3051 is a phosphotyrosine (Y3051). Disordered regions lie at residues 3086–3243 (EEAP…TEQL) and 3256–3312 (SALS…EGHS). S3097 is modified (phosphoserine). 3 stretches are compositionally biased toward low complexity: residues 3175–3198 (SPQR…SRSS), 3256–3265 (SALSSVQSSS), and 3272–3281 (TTATPSATAS). Residues 3287–3300 (TPRSATSHSISELS) show a composition bias toward polar residues.

The protein belongs to the G-protein coupled receptor 2 family. LN-TM7 subfamily.

The protein resides in the cell membrane. Functionally, receptor that may have an important role in cell/cell signaling during nervous system formation. The sequence is that of Cadherin EGF LAG seven-pass G-type receptor 3 (CELSR3) from Homo sapiens (Human).